We begin with the raw amino-acid sequence, 668 residues long: MPAIQNEIAQLTAELNQHNYRYYVDDSPSIPDAEYDRLLNRLKALETEHPEFCRPDSPTQRVGGEALAKFEQIKHLKPMLSLDNVFDEQEFTAFNQRIVDKTGKDLSYCCEPKLDGLAVSIVYRDGVFERAATRGDGQTGEDITENVRTIKSIPLTLRGDNFPPLVEVRGEVIMPHKAFDALNERARVKGDKLFVNPRNAAAGSLRQLDSKITASRALGFYAYALGVVEPETWELADSHYGQLEQLRSWGVPVSQEVRGCETVAEVMAYYYDIQQRRSSLEFEIDGVVVKVNQIAHQLSLGFVAKAPRWATAFKFPAQEEMTLLEGVDFQVGRTGAVTPVARLKPVFVGGVTVSNATLHNADEIARLGVKVGDTIIIRRAGDVIPQIVAVVAEKRPDDAKDIVFPAHCPVCDSEVERVEGEAVTRCTGGLFCEAQRKEAIKHFASRKALDIDGMGDKVVEQLIDKELVESPADLFRLTASAMTMLERMGMKSATKLVAAIEVAKQTTFARFLYALGIREVGEATAANLAAYFKTLEALKAASAEEFIKVDDVGTIVAAHLAHFLAQPHNLEVIDKLVEAGIHWPAVEEVAEEDLSLKGQTWVLTGTLTQLNRNDAKAKLQALGAKVAGSVSKNTDCLVAGAAAGSKLTKAQELGVKVIDEEALIAILS.

Residues 32 to 36 (DAEYD), 81 to 82 (SL), and Glu-111 each bind NAD(+). Residue Lys-113 is the N6-AMP-lysine intermediate of the active site. Residues Arg-134, Glu-171, Lys-290, and Lys-314 each coordinate NAD(+). Cys-408, Cys-411, Cys-426, and Cys-432 together coordinate Zn(2+). Positions 591-668 (EEDLSLKGQT…DEEALIAILS (78 aa)) constitute a BRCT domain.

This sequence belongs to the NAD-dependent DNA ligase family. LigA subfamily. The cofactor is Mg(2+). Requires Mn(2+) as cofactor.

It carries out the reaction NAD(+) + (deoxyribonucleotide)n-3'-hydroxyl + 5'-phospho-(deoxyribonucleotide)m = (deoxyribonucleotide)n+m + AMP + beta-nicotinamide D-nucleotide.. Its function is as follows. DNA ligase that catalyzes the formation of phosphodiester linkages between 5'-phosphoryl and 3'-hydroxyl groups in double-stranded DNA using NAD as a coenzyme and as the energy source for the reaction. It is essential for DNA replication and repair of damaged DNA. The chain is DNA ligase from Shewanella pealeana (strain ATCC 700345 / ANG-SQ1).